The sequence spans 129 residues: Phosphoribosyl-AMP cyclohydrolase (129 aa).

Position 84 (Asp84) interacts with Mg(2+). Residue Cys85 participates in Zn(2+) binding. Mg(2+)-binding residues include Asp86 and Asp88. Positions 101 and 108 each coordinate Zn(2+).

It belongs to the PRA-CH family. Homodimer. Mg(2+) is required as a cofactor. It depends on Zn(2+) as a cofactor.

The protein resides in the cytoplasm. The enzyme catalyses 1-(5-phospho-beta-D-ribosyl)-5'-AMP + H2O = 1-(5-phospho-beta-D-ribosyl)-5-[(5-phospho-beta-D-ribosylamino)methylideneamino]imidazole-4-carboxamide. It participates in amino-acid biosynthesis; L-histidine biosynthesis; L-histidine from 5-phospho-alpha-D-ribose 1-diphosphate: step 3/9. Functionally, catalyzes the hydrolysis of the adenine ring of phosphoribosyl-AMP. This is Phosphoribosyl-AMP cyclohydrolase from Halobacterium salinarum (strain ATCC 700922 / JCM 11081 / NRC-1) (Halobacterium halobium).